A 536-amino-acid polypeptide reads, in one-letter code: Bicoumarin synthase desC (536 aa).

A helical membrane pass occupies residues 12–32; the sequence is YVALAGITGFFLVFLGFLVVI. N-linked (GlcNAc...) asparagine glycans are attached at residues Asn-149 and Asn-371. A heme-binding site is contributed by Cys-480.

This sequence belongs to the cytochrome P450 family. The cofactor is heme.

It localises to the membrane. The catalysed reaction is 2 7-demethylsiderin + NADPH + O2 = desertorin A + NADP(+) + 2 H2O. Its pathway is secondary metabolite biosynthesis. Functionally, non-reducing polyketide synthase; part of the gene cluster that mediates the biosynthesis of the bicoumarin desertorin. The non-reducing polyketide synthase desS first catalyzes the formation of the pentaketidic 4,7-dihydroxy-5-methylcoumarin from acetyl coenzyme A and 4 malonyl coenzyme A molecules. Further O-methylation by desB leads to the formation of 7-demethylsiderin. Then, an oxidative phenol coupling catalyzed by the cytochrome P450 monooxygenase desC forms the 6,8'-dimer M-desertorin A via dimerization the monomeric precursor, 7-demethylsiderin. M-desertorin A is further converted to M-desertorin C. This chain is Bicoumarin synthase desC, found in Aspergillus desertorum (Emericella desertorum).